A 114-amino-acid polypeptide reads, in one-letter code: Protein gamma (114 aa).

This chain is Protein gamma (gamma), found in Bovine ephemeral fever virus (strain BB7721) (BEFV).